Here is a 438-residue protein sequence, read N- to C-terminus: uncharacterized protein (438 aa).

An N-terminal signal peptide occupies residues 1–32; that stretch reads MARPLLGKTSSVRRRLESLSACSIFFFLRKFC.

This is an uncharacterized protein from Frog virus 3 (isolate Goorha) (FV-3).